The chain runs to 64 residues: Cytochrome c oxidase subunit 5C (64 aa).

The helical transmembrane segment at 16-34 (VVKELVIGFSLGLVAGGFW) threads the bilayer.

Belongs to the cytochrome c oxidase subunit 5C family. In terms of assembly, sweet potato cytochrome C oxidase consists of at least seven different polypeptides species, subunits I, II, III, IV, Va, Vb, and Vc in order of MW.

It is found in the mitochondrion inner membrane. Its function is as follows. This protein is one of the nuclear-coded polypeptide chains of cytochrome c oxidase, the terminal oxidase in mitochondrial electron transport. The protein is Cytochrome c oxidase subunit 5C (COX5C) of Ipomoea batatas (Sweet potato).